Here is a 1080-residue protein sequence, read N- to C-terminus: AP-4 complex subunit epsilon (1080 aa).

5 HEAT repeats span residues 161-198, 201-238, 369-405, 406-443, and 445-479; these read DTIP…LVGD, LDDD…KHST, QLIE…KVSP, KLVL…QTNV, and PVCS…KYSP. Disordered regions lie at residues 711-782, 801-920, 933-973, and 996-1027; these read TPLV…FPQQ, NNNS…NIDP, FSEN…INNN, and TNNS…NNNL. 5 stretches are compositionally biased toward low complexity: residues 762–782, 801–847, 878–911, 936–952, and 962–972; these read QQQQ…FPQQ, NNNS…PNNQ, NKQT…IQKH, NNNR…NQNN, and KKSNNENNINN.

This sequence belongs to the adaptor complexes large subunit family. May be part of the adaptor protein complex 4 (AP-4), a heterotetramer composed of two large adaptins (epsilon-type subunitand beta-type subunit), a medium adaptin (mu-type subunit) and a small adaptin (sigma-type).

Its subcellular location is the golgi apparatus. The protein resides in the trans-Golgi network membrane. Probable component of an adaptor protein complex. Adaptor protein complexes are vesicle coat components involved both in vesicle formation and cargo selection. They control the vesicular transport of proteins in different trafficking pathways. This chain is AP-4 complex subunit epsilon, found in Dictyostelium discoideum (Social amoeba).